Reading from the N-terminus, the 133-residue chain is Large ribosomal subunit protein uL22 (133 aa).

Belongs to the universal ribosomal protein uL22 family. Part of the 50S ribosomal subunit.

Its function is as follows. This protein binds specifically to 23S rRNA; its binding is stimulated by other ribosomal proteins, e.g. L4, L17, and L20. It is important during the early stages of 50S assembly. It makes multiple contacts with different domains of the 23S rRNA in the assembled 50S subunit and ribosome. The globular domain of the protein is located near the polypeptide exit tunnel on the outside of the subunit, while an extended beta-hairpin is found that lines the wall of the exit tunnel in the center of the 70S ribosome. In Granulibacter bethesdensis (strain ATCC BAA-1260 / CGDNIH1), this protein is Large ribosomal subunit protein uL22.